A 410-amino-acid polypeptide reads, in one-letter code: MEPPPAPGPERLFDSHRLPSDGFLLLALLLYAPVGLCLLVLRLFLGLHVFLVSCALPDSVLRRFVVRTMCAVLGLVARQEDSGLRDHRVRVLISNHVTPFDHNIVNLLTTCSTPLLNSPPSFVCWSRGFMEMDRRVELVESLKKFCASTRLPPTPLLLFPEEEATNGREGLLRFSSWPFSIQDVVQPLTLQVQRPLVSVTVSDASWVSELLWSLFVPFTVYQVRWLHPIRRQLGEENEEFALRVQQLVAKELGQIGTRLTPADKAEHMKRQRHPRLRPQSVQSSFPSPPSPSSDVQLTILAQRVKEVLPHVPLNVIQRDLARTGCVDLTITNLLEGAVAFMPEDVTEGSQSLPTASAPKFPSSGLVTPQPTALTFAKSSWARQESLQERKQALYEYARRRFRERQAQEAE.

N-acetylmethionine is present on Met1. At 1-20 (MEPPPAPGPERLFDSHRLPS) the chain is on the cytoplasmic side. Residues 21–41 (DGFLLLALLLYAPVGLCLLVL) lie within the membrane without spanning it. The Cytoplasmic portion of the chain corresponds to 42–410 (RLFLGLHVFL…FRERQAQEAE (369 aa)). Residues 259-293 (LTPADKAEHMKRQRHPRLRPQSVQSSFPSPPSPSS) are disordered. Ser292 is subject to Phosphoserine. The CUE domain occupies 296 to 338 (QLTILAQRVKEVLPHVPLNVIQRDLARTGCVDLTITNLLEGAV). The segment at 348 to 367 (GSQSLPTASAPKFPSSGLVT) is disordered. The residue at position 363 (Ser363) is a Phosphoserine. At Thr367 the chain carries Phosphothreonine.

Belongs to the AUP1 family. As to quaternary structure, identified in a complex that contains SEL1L, OS9, FAF2/UBXD8, UBE2J1/UBC6E and AUP1. Interacts with the cytoplasmic tail of ITGA2B, ITGA1, ITGA2, ITGA5, ITGAV and ITGAM. Interacts (via C-terminus) with UBE2G2; the interaction recruits UBE2G2 to lipid droplets. Interacts with ubiquitin ligases AMFR/gp78 and RNF139/TRC8; this promotes interaction of UBE2G2 with AMFR and RNF139. Interacts with apolipoprotein APOB. Monoubiquitinated and diubiquitinated.

Its subcellular location is the endoplasmic reticulum membrane. The protein localises to the lipid droplet. Plays a role in the translocation of terminally misfolded proteins from the endoplasmic reticulum lumen to the cytoplasm and their degradation by the proteasome. Plays a role in lipid droplet formation. Induces lipid droplet clustering. Recruits ubiquitin-conjugating enzyme UBE2G2 to lipid droplets which facilitates its interaction with ubiquitin ligases AMFR/gp78 and RNF139/TRC8, leading to sterol-induced ubiquitination of HMGCR and its subsequent proteasomal degradation. Also required for the degradation of INSIG1, SREBF1 and SREBF2. Plays a role in regulating assembly and secretion of very low density lipoprotein particles and stability of apolipoprotein APOB. The chain is Lipid droplet-regulating VLDL assembly factor AUP1 from Rattus norvegicus (Rat).